The chain runs to 429 residues: Glutamate-1-semialdehyde 2,1-aminomutase (429 aa).

The residue at position 270 (Lys-270) is an N6-(pyridoxal phosphate)lysine.

It belongs to the class-III pyridoxal-phosphate-dependent aminotransferase family. HemL subfamily. As to quaternary structure, homodimer. It depends on pyridoxal 5'-phosphate as a cofactor.

The protein localises to the cytoplasm. The catalysed reaction is (S)-4-amino-5-oxopentanoate = 5-aminolevulinate. Its pathway is porphyrin-containing compound metabolism; protoporphyrin-IX biosynthesis; 5-aminolevulinate from L-glutamyl-tRNA(Glu): step 2/2. The chain is Glutamate-1-semialdehyde 2,1-aminomutase from Cupriavidus pinatubonensis (strain JMP 134 / LMG 1197) (Cupriavidus necator (strain JMP 134)).